The chain runs to 203 residues: Ribosomal RNA large subunit methyltransferase E (203 aa).

The S-adenosyl-L-methionine site is built by Gly51, Trp53, Asp69, Asp85, and Asp108. Catalysis depends on Lys148, which acts as the Proton acceptor.

It belongs to the class I-like SAM-binding methyltransferase superfamily. RNA methyltransferase RlmE family.

It is found in the cytoplasm. It carries out the reaction uridine(2552) in 23S rRNA + S-adenosyl-L-methionine = 2'-O-methyluridine(2552) in 23S rRNA + S-adenosyl-L-homocysteine + H(+). In terms of biological role, specifically methylates the uridine in position 2552 of 23S rRNA at the 2'-O position of the ribose in the fully assembled 50S ribosomal subunit. The protein is Ribosomal RNA large subunit methyltransferase E of Methanocorpusculum labreanum (strain ATCC 43576 / DSM 4855 / Z).